A 309-amino-acid polypeptide reads, in one-letter code: MAGTGVVAVYGNGAITETKKSPFSVKVGLAQMLRGGVIMDVVNPEQARIAEEAGACAVMALERVPADIRAQGGVARMSDPQLIKEIKQSVTIPVMAKARIGHFVEAQILEAIGIDYVDESEVLTPADEENHINKHNFRIPFVCGCRNLGEALRRIREGAAMIRTKGEAGTGNVIEAVRHVRSVMGDIRLLRNMDDDEVFTFAKKIAAPYDLVMQTKQLGRLPVVQFAAGGVATPADAALMMQLGCDGVFVGSGVFKSGDPARRARAIVQAVTHYSDPDMLAEVSCGLGEAMVGINLNDKKVERFANRSE.

Position 40 (Asp40) interacts with D-ribose 5-phosphate. The active-site Schiff-base intermediate with D-ribose 5-phosphate is Lys97. Gly169 is a D-ribose 5-phosphate binding site. Position 181 (Arg181) interacts with D-glyceraldehyde 3-phosphate. D-ribose 5-phosphate is bound by residues Gly230 and 251–252 (GS).

This sequence belongs to the PdxS/SNZ family.

The catalysed reaction is aldehydo-D-ribose 5-phosphate + D-glyceraldehyde 3-phosphate + L-glutamine = pyridoxal 5'-phosphate + L-glutamate + phosphate + 3 H2O + H(+). It participates in cofactor biosynthesis; pyridoxal 5'-phosphate biosynthesis. In terms of biological role, catalyzes the formation of pyridoxal 5'-phosphate from ribose 5-phosphate (RBP), glyceraldehyde 3-phosphate (G3P) and ammonia. The ammonia is provided by PDX2. Can also use ribulose 5-phosphate and dihydroxyacetone phosphate as substrates, resulting from enzyme-catalyzed isomerization of RBP and G3P, respectively. Also plays an indirect role in resistance to singlet oxygen-generating photosensitizers. In Hevea brasiliensis (Para rubber tree), this protein is Probable pyridoxal 5'-phosphate synthase subunit PDX1 (PDX1).